A 194-amino-acid chain; its full sequence is Imidazoleglycerol-phosphate dehydratase (194 aa).

The protein belongs to the imidazoleglycerol-phosphate dehydratase family.

It is found in the cytoplasm. It carries out the reaction D-erythro-1-(imidazol-4-yl)glycerol 3-phosphate = 3-(imidazol-4-yl)-2-oxopropyl phosphate + H2O. The protein operates within amino-acid biosynthesis; L-histidine biosynthesis; L-histidine from 5-phospho-alpha-D-ribose 1-diphosphate: step 6/9. This chain is Imidazoleglycerol-phosphate dehydratase, found in Rubrobacter xylanophilus (strain DSM 9941 / JCM 11954 / NBRC 16129 / PRD-1).